Here is an 817-residue protein sequence, read N- to C-terminus: B lymphocyte-induced maturation protein 1 homolog (817 aa).

Residues 1–62 are disordered; sequence MGQGSGDDGV…PAGVSASGAR (62 aa). The segment covering 15 to 61 has biased composition (low complexity); that stretch reads FSSAAAAAHSPPHSPLSVGVSSASSATSSSSTPPSSTSPAGVSASGA. The region spanning 103-241 is the SET domain; sequence MNLILKSSSK…ANTELSFWFS (139 aa). 4 consecutive C2H2-type zinc fingers follow at residues 508–530, 536–558, 564–586, and 592–614; these read YACK…VRTH, FKCE…HLVH, HRCD…LRLH, and YTCD…KRLH. Residues 620–642 form a C2H2-type 5; degenerate zinc finger; sequence YSCGTCGKKYISPSGLRTHWKTT. Residues 709-817 form a disordered region; it reads LLGQGPSGMQ…LPSLGLPHYP (109 aa). The segment covering 779 to 794 has biased composition (low complexity); the sequence is QGGPSSGSGQQQHPQH.

In terms of assembly, interacts with dre-1; the interaction targets blmp-1 for proteasomal degradation. Interacts with ldb-1 and ham-3. Post-translationally, ubiquitinated by the SCF(dre-1) complex, leading to its degradation by the proteasome. As to expression, expressed in hypodermal, vulval, intestinal and distal tip cells.

Its subcellular location is the nucleus. It is found in the cytoplasm. Functionally, transcription factor which binds to enhancer elements in the promoter region of genes. Regulates the expression of the transcription factor bed-3 to control vulval development. Promotes terminal differentiation in the hypodermis and is involved in regulation of gonadal outgrowth and entry into the dauer stage. Regulates the timing of dorsalward migration of the distal tip cells of the hermaphrodite gonad by inhibiting precocious unc-5 and lin-29 expression which in turn prevents early dorsalward turning. Plays a role in male tail tip morphogenesis. This Caenorhabditis elegans protein is B lymphocyte-induced maturation protein 1 homolog.